Here is a 117-residue protein sequence, read N- to C-terminus: Large ribosomal subunit protein uL18 (117 aa).

The protein belongs to the universal ribosomal protein uL18 family. Part of the 50S ribosomal subunit; part of the 5S rRNA/L5/L18/L25 subcomplex. Contacts the 5S and 23S rRNAs.

Its function is as follows. This is one of the proteins that bind and probably mediate the attachment of the 5S RNA into the large ribosomal subunit, where it forms part of the central protuberance. This chain is Large ribosomal subunit protein uL18, found in Edwardsiella ictaluri (strain 93-146).